The following is a 229-amino-acid chain: Coiled-coil domain-containing protein 134 (229 aa).

The N-terminal stretch at methionine 1–glycine 22 is a signal peptide. Asparagine 148 is a short sequence motif (prevents secretion from ER). A glycan (N-linked (GlcNAc...) asparagine) is linked at asparagine 148. Positions threonine 193–leucine 229 are disordered. Residues phenylalanine 196–lysine 218 are a coiled coil. The Nuclear localization signal motif lies at arginine 206–arginine 213.

Belongs to the CCDC134 family. Interacts with TADA2A. Associates with the PCAF complex via TADA2A binding. In terms of processing, O-glycosylated, with additional sialic acid modifications. Expressed in cervical gland, cervical squamous epithelium, endometrium, stomach, kidney distal convoluted tubule, spermatogenic cells in testis, mammary gland, liver and striated muscle (at protein level). Also detected in placenta. Highest expression in testis relative to other tissues. Detected in T cells and dendritic cells; highly expressed in activated CD8(+) T cells, and also expressed at lower levels in CD4(+) T cells.

The protein resides in the endoplasmic reticulum lumen. The protein localises to the secreted. It is found in the cytoplasm. It localises to the nucleus. Its function is as follows. Molecular adapter required to prevent protein hyperglycosylation of HSP90B1: during translation, associates with nascent HSP90B1 and the STT3A catalytic component of the OST-A complex and tethers them to a specialized translocon that forms a microenvironment for HSP90B1 folding. In the CCDC134-containing translocon, STT3A associates with the SRT pseudosubstrate motif of HSP90B1, preventing access to facultative glycosylation sites until folding is completed, preventing hyperglycosylation and subsequent degradation of HSP90B1. In extracellular secreted form, promotes proliferation and activation of CD8(+) T-cells, suggesting a cytokine-like function. May inhibit ERK and JNK signaling activity. May suppress cell migration and invasion activity, via its effects on ERK and JNK signaling. May also localize in the nucleus: enhances stability of the PCAF histone acetyltransferase (HAT) complex member TADA2A and thus promotes PCAF-mediated histone acetyltransferase activity. Has a critical role in the regulation of osteogenesis and bone development. This is Coiled-coil domain-containing protein 134 from Homo sapiens (Human).